We begin with the raw amino-acid sequence, 252 residues long: Beta-carotene isomerase D27, chloroplastic (252 aa).

The transit peptide at 1–43 directs the protein to the chloroplast; that stretch reads MDSKMIAHNMSLTPTLAQWKKLRLKPKHTFVVGVLARPTDDIS.

The cofactor is Fe cation. In terms of tissue distribution, highly expressed in roots. Expressed at low levels in leaves and stems.

The protein localises to the plastid. It localises to the chloroplast. It carries out the reaction all-trans-beta-carotene = 9-cis-beta-carotene. Its function is as follows. Involved in strigolactones biosynthesis by catalyzing the isomerization of the C9-C10 double bond in all-trans-beta-carotene leading to 9-cis-beta-carotene and providing the substrate for CCD7. Strigolactones are hormones that inhibit tillering and shoot branching through the MAX-dependent pathway, contribute to the regulation of shoot architectural response to phosphate-limiting conditions and function as rhizosphere signals that stimulate hyphal branching of arbuscular mycorrhizal fungi and trigger seed germination of root parasitic weeds. The polypeptide is Beta-carotene isomerase D27, chloroplastic (Medicago truncatula (Barrel medic)).